The sequence spans 575 residues: uncharacterized protein (575 aa).

It localises to the cytoplasm. It is found in the cytoskeleton. Its subcellular location is the microtubule organizing center. The protein localises to the spindle pole body. This is an uncharacterized protein from Schizosaccharomyces pombe (strain 972 / ATCC 24843) (Fission yeast).